The sequence spans 128 residues: Large ribosomal subunit protein mL52 (128 aa).

Residues 1–28 (MLQIAKLCLATSGRITAQRYVAVTTARA) constitute a mitochondrion transit peptide.

It belongs to the mitochondrion-specific ribosomal protein mL52 family. Component of the mitochondrial ribosome large subunit (39S) which comprises a 16S rRNA and about 50 distinct proteins.

Its subcellular location is the mitochondrion. This chain is Large ribosomal subunit protein mL52 (mRpL52), found in Drosophila pseudoobscura pseudoobscura (Fruit fly).